The primary structure comprises 219 residues: Predicted GPI-anchored protein 6 (219 aa).

An N-terminal signal peptide occupies residues 1–19 (MQFQTLLVVAGSLVASTLA). 3 N-linked (GlcNAc...) asparagine glycosylation sites follow: asparagine 21, asparagine 173, and asparagine 188. Glycine 194 carries GPI-anchor amidated glycine lipidation. Residues 195–219 (GAVGGASNQITVGFAAIAGLAAILL) constitute a propeptide, removed in mature form.

This sequence belongs to the flocculin family. Post-translationally, the GPI-anchor is attached to the protein in the endoplasmic reticulum and serves to target the protein to the cell surface. There, the glucosamine-inositol phospholipid moiety is cleaved off and the GPI-modified mannoprotein is covalently attached via its lipidless GPI glycan remnant to the 1,6-beta-glucan of the outer cell wall layer.

It is found in the secreted. Its subcellular location is the cell wall. The protein localises to the membrane. Functionally, probable cell wall protein that participates directly in adhesive cell-cell interactions. The protein is Predicted GPI-anchored protein 6 (PGA6) of Candida albicans (strain SC5314 / ATCC MYA-2876) (Yeast).